A 439-amino-acid polypeptide reads, in one-letter code: MRPGNAATAHDTGTQPRPGPTENWRSPAAVTRSKQARELGDRLRGRLEVAADVLRLLVPGLRHQHQQARALLTEVGQSGVAVLMQVPARAHSADRSVVVQQCAGLPVRQPGEAGVRADVTRADDLSRTGAAVSDEYRPTGAALEQPGQEPGGTGVPIEGLQHEVLTDLASAAGLRLRPLGLGRAAAAGEVQILDVHAQDLLRAPGGLVEHPPQCLLPQVHLTPRDQPVNGHAGAGRGLGVRHREPFRPGRNGGAVVATLPAPAEPGQHRRAPGVLGVHRGSTPEQFERLADLVVRDRGQRSGLAEPFGGLAHPDPVVADRVRVAERVQEHVRRGPDAERLAGRQLYDGGHRFPLATDNRAASRTARRASPQVTDQATADIGVLSAGRLQTSPPADAPSAAHLGRLILSAGFRSDVPQPPPSPACRTTRAGSGAVAAVPR.

3 disordered regions span residues 1 to 36 (MRPG…SKQA), 126 to 157 (SRTG…GVPI), and 411 to 439 (FRSD…AVPR).

This is an uncharacterized protein from Streptomyces fradiae (Streptomyces roseoflavus).